The primary structure comprises 199 residues: MILKVCGITTQWDADAAIAAGATAIGFNFYPKSPRFVTPEIAAAITTKGARRVGVFVNERPARVEEIARIAALDVAQLHGDEGPGDYPGALTVWKAARVTPNFDFAQYDESPAEALLLDGPAAELYGGAGHTFDWTLAAASSHRIIVAGGLDASNVARAVELAHPWGVDSCSRIESAPGKKDIQKMTDFLHAAKAALGA.

The protein belongs to the TrpF family.

It carries out the reaction N-(5-phospho-beta-D-ribosyl)anthranilate = 1-(2-carboxyphenylamino)-1-deoxy-D-ribulose 5-phosphate. The protein operates within amino-acid biosynthesis; L-tryptophan biosynthesis; L-tryptophan from chorismate: step 3/5. This Solibacter usitatus (strain Ellin6076) protein is N-(5'-phosphoribosyl)anthranilate isomerase.